We begin with the raw amino-acid sequence, 429 residues long: Histidine--tRNA ligase (429 aa).

Belongs to the class-II aminoacyl-tRNA synthetase family. Homodimer.

It is found in the cytoplasm. The enzyme catalyses tRNA(His) + L-histidine + ATP = L-histidyl-tRNA(His) + AMP + diphosphate + H(+). The polypeptide is Histidine--tRNA ligase (Chlorobium phaeobacteroides (strain DSM 266 / SMG 266 / 2430)).